The following is a 192-amino-acid chain: NOP protein chaperone 1 (192 aa).

A compositionally biased stretch (low complexity) spans 1–26 (MEVSGESHSGPSCSSSSRDGSGVSVS). The tract at residues 1 to 39 (MEVSGESHSGPSCSSSSRDGSGVSVSKELLMAGSGGRGG) is disordered. S34 and S66 each carry phosphoserine. A disordered region spans residues 118–192 (FEMNQSHSKE…SENKEKQENK (75 aa)). Acidic residues predominate over residues 129–152 (DSSEENSQDSSEESSESEDEDDST). A compositionally biased stretch (basic and acidic residues) spans 164-177 (KLPHSEDGKGKIEV). A Phosphoserine modification is found at S180.

In terms of assembly, interacts with NOP58, RUVBL1 and RUVBL2; the interactions are direct and NOPCHAP1 bridges the association of NOP58 with RUVBL1:RUVBL2 even in absence of snoRNAs. The interactions with RUVBL1 and RUVBL2 are disrupted upon ATP binding.

The protein resides in the nucleus. Client-loading PAQosome/R2TP complex cofactor that selects NOP58 to promote box C/D small nucleolar ribonucleoprotein (snoRNP) assembly. Acts as a bridge between NOP58 and the R2TP complex via RUVBL1:RUVBL2. The chain is NOP protein chaperone 1 (NOPCHAP1) from Bos taurus (Bovine).